The primary structure comprises 644 residues: Chaperone protein DnaK (644 aa).

Threonine 199 carries the post-translational modification Phosphothreonine; by autocatalysis. Positions 589–644 (QALAEASHKLAEKMYSQGQGPQAGPGEEPSGQSGGTEKPVEGEVVDAEFEEVKNKK) are disordered. The segment covering 604–619 (SQGQGPQAGPGEEPSG) has biased composition (low complexity).

It belongs to the heat shock protein 70 family.

Acts as a chaperone. The sequence is that of Chaperone protein DnaK from Nitrosospira multiformis (strain ATCC 25196 / NCIMB 11849 / C 71).